The chain runs to 575 residues: Hemagglutinin-neuraminidase (575 aa).

Residues 1–10 (MDGDRGKRDS) are compositionally biased toward basic and acidic residues. The segment at 1–27 (MDGDRGKRDSYWSTSPSGSTTKPASGW) is disordered. Over 1–37 (MDGDRGKRDSYWSTSPSGSTTKPASGWERSSKADTWL) the chain is Intravirion. The tract at residues 10-14 (SYWST) is incorporation in virion. Positions 11-23 (YWSTSPSGSTTKP) are enriched in polar residues. A helical; Signal-anchor for type II membrane protein transmembrane segment spans residues 38 to 58 (LILSFTQWALSIATVIICIII). Residues 59-140 (SARQGYSMKE…RQELTQHCES (82 aa)) form an interaction with F protein region. Residues 59–575 (SARQGYSMKE…SIPKLCKAES (517 aa)) lie on the Virion surface side of the membrane. Residue Asn77 is glycosylated (N-linked (GlcNAc...) asparagine; by host). 4 cysteine pairs are disulfide-bonded: Cys192–Cys216, Cys258–Cys271, Cys357–Cys469, and Cys463–Cys473. The interval 254 to 259 (NRKSCS) is involved in neuraminidase activity. N-linked (GlcNAc...) asparagine; by host glycans are attached at residues Asn499 and Asn511. Cysteines 535 and 544 form a disulfide.

Belongs to the paramyxoviruses hemagglutinin-neuraminidase family. Homotetramer; composed of disulfide-linked homodimers. Interacts with F protein trimer. Post-translationally, N-glycosylated; glycans consist of a mixture of high mannose-type oligosaccharides and of complex-type oligosaccharides.

The protein resides in the virion membrane. It is found in the host cell membrane. The enzyme catalyses Hydrolysis of alpha-(2-&gt;3)-, alpha-(2-&gt;6)-, alpha-(2-&gt;8)- glycosidic linkages of terminal sialic acid residues in oligosaccharides, glycoproteins, glycolipids, colominic acid and synthetic substrates.. Its function is as follows. Attaches the virus to sialic acid-containing cell receptors and thereby initiating infection. Binding of HN protein to the receptor induces a conformational change that allows the F protein to trigger virion/cell membranes fusion. In terms of biological role, neuraminidase activity ensures the efficient spread of the virus by dissociating the mature virions from the neuraminic acid containing glycoproteins. The chain is Hemagglutinin-neuraminidase (HN) from Sendai virus (strain Z) (SeV).